The following is a 692-amino-acid chain: Elongation factor G (692 aa).

The tr-type G domain occupies 8-282 (EKTRNIGIMA…AIVDYLPAPT (275 aa)). Residues 17–24 (AHIDAGKT), 81–85 (DTPGH), and 135–138 (NKMD) each bind GTP.

This sequence belongs to the TRAFAC class translation factor GTPase superfamily. Classic translation factor GTPase family. EF-G/EF-2 subfamily.

It localises to the cytoplasm. Functionally, catalyzes the GTP-dependent ribosomal translocation step during translation elongation. During this step, the ribosome changes from the pre-translocational (PRE) to the post-translocational (POST) state as the newly formed A-site-bound peptidyl-tRNA and P-site-bound deacylated tRNA move to the P and E sites, respectively. Catalyzes the coordinated movement of the two tRNA molecules, the mRNA and conformational changes in the ribosome. This chain is Elongation factor G, found in Pelotomaculum thermopropionicum (strain DSM 13744 / JCM 10971 / SI).